The chain runs to 142 residues: Hemoglobin subunit alpha (142 aa).

The Globin domain maps to 2–142 (VLSAADKGNV…VSTVLTSKYR (141 aa)). Serine 4 is modified (phosphoserine). Residues lysine 8 and lysine 12 each carry the N6-succinyllysine modification. Lysine 17 is modified (N6-acetyllysine; alternate). Position 17 is an N6-succinyllysine; alternate (lysine 17). Tyrosine 25 is subject to Phosphotyrosine. Serine 36 carries the post-translational modification Phosphoserine. Lysine 41 is subject to N6-succinyllysine. Serine 50 is modified (phosphoserine). Histidine 59 lines the O2 pocket. Histidine 88 serves as a coordination point for heme b. Position 103 is a phosphoserine (serine 103). The residue at position 109 (threonine 109) is a Phosphothreonine. Serine 125 carries the phosphoserine modification. Phosphothreonine occurs at positions 135 and 138. Serine 139 is subject to Phosphoserine.

It belongs to the globin family. In terms of assembly, heterotetramer of two alpha chains and two beta chains. In terms of tissue distribution, red blood cells.

Its function is as follows. Involved in oxygen transport from the lung to the various peripheral tissues. Hemopressin acts as an antagonist peptide of the cannabinoid receptor CNR1. Hemopressin-binding efficiently blocks cannabinoid receptor CNR1 and subsequent signaling. This chain is Hemoglobin subunit alpha (HBA), found in Bos gaurus frontalis (Domestic gayal).